The primary structure comprises 325 residues: RNA ligase 1 (325 aa).

Requires Mg(2+) as cofactor. Mn(2+) serves as cofactor. Post-translationally, AMPylates itself (auto-AMPylation).

It carries out the reaction ATP + (ribonucleotide)n-3'-hydroxyl + 5'-phospho-(ribonucleotide)m = (ribonucleotide)n+m + AMP + diphosphate.. Its function is as follows. Functions as an RNA ligase, in vitro. The ligation reaction entails three nucleotidyl transfer steps. In the first step, the RNA ligase reacts with ATP in the absence of nucleic acid to form a covalent ligase-AMP intermediate and release pyrophosphate. In step 2, the ligase-AMP binds to the nucleic acid and transfers the adenylate to the 5'-PO4 terminus to form an adenylylated intermediate. In step 3, the RNA ligase directs the attack of the 3'-OH on the 5'-phosphoanhydride linkage, resulting in a repaired 3'-5' phosphodiester and release of AMP. Exhibits selectivity for single-stranded RNA substrates and may not have nick-sealing activity on double-stranded DNA-RNA hybrids. May play a role in maintaining RNA integrity under stress conditions, for example in response to reactive oxygen species (ROS). The chain is RNA ligase 1 from Rattus norvegicus (Rat).